We begin with the raw amino-acid sequence, 159 residues long: Elicitor-responsive protein 1 (159 aa).

The C2 domain occupies 1-112 (MAGSGVLEVH…SLGMEHGTWE (112 aa)). Positions 21 and 30 each coordinate Ca(2+). Ser44 carries the phosphoserine; by CPK modification. 4 residues coordinate Ca(2+): Asp81, Asp83, Ser86, and Asp89.

The cofactor is Ca(2+). Post-translationally, phosphorylated at Ser-44 by CPK18 in a calcium-dependent manner. In terms of tissue distribution, isoform 2 is expressed in young vascular tissues and tiller buds.

It is found in the cytoplasm. The protein resides in the cell membrane. May play a role in plant defense signaling. Isoform 2 binds to phospholipids in a Ca(2+)-dependent manner in response to pathogen elicitors. This chain is Elicitor-responsive protein 1 (ERG1), found in Oryza sativa subsp. japonica (Rice).